A 942-amino-acid chain; its full sequence is PH and SEC7 domain-containing protein C11E3.11c (942 aa).

Over residues 1 to 18 (MSRNASNAYLKNGNSTPS) the composition is skewed to polar residues. Disordered stretches follow at residues 1-128 (MSRN…TRLN) and 259-308 (SRNL…ETTR). Residues 24–40 (PSSLSQRSKTSTRSSKP) show a composition bias toward low complexity. Composition is skewed to polar residues over residues 50 to 60 (WFKNESSSRHP), 90 to 125 (ASMSTNDLPSHPRSQSVMGFSSSTSQLTGTSNSSRT), 271 to 284 (YGNSRTPLRDSSNY), and 292 to 305 (NRQSSLSIPKSTSE). The SEC7 domain occupies 295-497 (SSLSIPKSTS…LSSYKSFASN (203 aa)). Residues 681–804 (PYIKQGILKF…WIDALNYWAA (124 aa)) enclose the PH domain.

This is PH and SEC7 domain-containing protein C11E3.11c from Schizosaccharomyces pombe (strain 972 / ATCC 24843) (Fission yeast).